A 137-amino-acid polypeptide reads, in one-letter code: uncharacterized protein (137 aa).

Residues 4–21 (ISWQIVLAVIGVVAGFII) traverse the membrane as a helical segment.

Its subcellular location is the membrane. This is an uncharacterized protein from Archaeoglobus fulgidus (strain ATCC 49558 / DSM 4304 / JCM 9628 / NBRC 100126 / VC-16).